The primary structure comprises 308 residues: MHEGHQESFKELEMTKPYMFFNELVGEEDYNKELENSNTKFQGQGQLKLLLGELYFLNTLIKNKTLCSDTVIVYIGSAPGSHINFLYHYMDDLKIDLKWILIDGRDHDRSLESLKNVSIIHRFVDEQYLFKLRNMIRKNHKIVLISDIRSLRGKEPTSEDLLHDYALQNQMVSILKPIASSLKWRCPFPDQWIRDFYIPCGDEFLQPFAPPFSAEMRLLSCYSRAPIRLIRIDKNAAIEYEKKMFYLNTKIRPKIVLDFDYPNQKYDYFYMFYILKDIVLPTYKEFSTYKQKVIFLQEAIFNALNIKP.

Tyrosine 30 contacts mRNA. Positions 46, 74, 76, 80, 103, 105, 124, and 147 each coordinate S-adenosyl-L-methionine. The tract at residues 177-257 (PIASSLKWRC…NTKIRPKIVL (81 aa)) is binding to NPH-I. Catalysis depends on lysine 183, which acts as the For methyltransferase activity. MRNA contacts are provided by residues 185-188 (RCPF), aspartate 190, 213-215 (SAE), and glutamate 241.

Belongs to the class I-like SAM-binding methyltransferase superfamily. Poxvirus/kinetoplastid 2'-O-MTase family. Interacts with poly(A) polymerase catalytic subunit OPG063. Interacts with OPG109 and OPG123; these interactions might help linking transcription to capping and polyadenylation.

Its subcellular location is the virion. It catalyses the reaction a 5'-end (N(7)-methyl 5'-triphosphoguanosine)-ribonucleoside in mRNA + S-adenosyl-L-methionine = a 5'-end (N(7)-methyl 5'-triphosphoguanosine)-(2'-O-methyl-ribonucleoside) in mRNA + S-adenosyl-L-homocysteine + H(+). Functionally, displays methyltransferase, positive regulation of the poly(A) polymerase and transcription elongation activities. Involved in the modification of both mRNA ends and in intermediate and late gene positive transcription elongation. At the mRNAs 5' end, methylates the ribose 2' OH group of the first transcribed nucleotide, thereby producing a 2'-O-methylpurine cap. At the 3' end, functions as a processivity factor which stimulates the activity of the viral poly(A) polymerase OPG063 that creates mRNA's poly(A) tail. In the presence of OPG102, OPG063 does not dissociate from the RNA allowing tail elongation to around 250 adenylates. The sequence is that of Cap-specific mRNA (nucleoside-2'-O-)-methyltransferase (OPG102) from Fowlpox virus (strain NVSL) (FPV).